A 57-amino-acid chain; its full sequence is Large ribosomal subunit protein bL32 (57 aa).

Residues 1 to 37 (MAVQQNKPTRSKRGMRRSHDALTAVTSLSVDKTSGEK) form a disordered region.

It belongs to the bacterial ribosomal protein bL32 family.

This is Large ribosomal subunit protein bL32 from Escherichia fergusonii (strain ATCC 35469 / DSM 13698 / CCUG 18766 / IAM 14443 / JCM 21226 / LMG 7866 / NBRC 102419 / NCTC 12128 / CDC 0568-73).